We begin with the raw amino-acid sequence, 322 residues long: MTNVTYLDFEKAIGELDAKIDALRCSEDESAIDLSEEINRLSARSEKLTKELYERLTPWQIVQVARHPARPYTLDYVNFIFTDFHELHGDRSYADDQSIVGGLARFNDRPCVVVGHQKGRNTKERAMRNFGYPRPEGYRKALRLFKLAEKFRLPIFTFIDTPGAWPGIDAEEHNQSEAIGRNLMEMASLQTPIITTVIGEGGSGGALAIGVGDVSIMLQFSTYSVISPESCSSILWKNPNYAEQAANALGLTAHRLKALGLIDKIANEPVGGAHRDPQQMALMLKRVLQESLRNVESLDAKQLLVRRHERLMHYGKFRETAV.

Residues 37-294 (EINRLSARSE…KRVLQESLRN (258 aa)) form the CoA carboxyltransferase C-terminal domain.

The protein belongs to the AccA family. In terms of assembly, acetyl-CoA carboxylase is a heterohexamer composed of biotin carboxyl carrier protein (AccB), biotin carboxylase (AccC) and two subunits each of ACCase subunit alpha (AccA) and ACCase subunit beta (AccD).

It localises to the cytoplasm. The catalysed reaction is N(6)-carboxybiotinyl-L-lysyl-[protein] + acetyl-CoA = N(6)-biotinyl-L-lysyl-[protein] + malonyl-CoA. The protein operates within lipid metabolism; malonyl-CoA biosynthesis; malonyl-CoA from acetyl-CoA: step 1/1. Component of the acetyl coenzyme A carboxylase (ACC) complex. First, biotin carboxylase catalyzes the carboxylation of biotin on its carrier protein (BCCP) and then the CO(2) group is transferred by the carboxyltransferase to acetyl-CoA to form malonyl-CoA. Functionally, confers resistance to the endogenous polyketide antibiotic thailandamide. Can replace the endogenous gene in S.typhimurium, conferring slow growth and resistance to thailandamide. Can also replace the endogenous gene in E.coli, conferring resistance to thailandamide. This Burkholderia thailandensis (strain ATCC 700388 / DSM 13276 / CCUG 48851 / CIP 106301 / E264) protein is Acetyl-coenzyme A carboxylase carboxyl transferase subunit alpha 2.